The following is a 404-amino-acid chain: CCA-adding enzyme (404 aa).

Positions 32 and 35 each coordinate ATP. Residues Gly-32 and Arg-35 each coordinate CTP. Residues Asp-45 and Asp-47 each contribute to the Mg(2+) site. Positions 116, 159, 162, 165, and 168 each coordinate ATP. Positions 116, 159, 162, 165, and 168 each coordinate CTP.

Belongs to the tRNA nucleotidyltransferase/poly(A) polymerase family. Bacterial CCA-adding enzyme type 3 subfamily. Homodimer. It depends on Mg(2+) as a cofactor.

It carries out the reaction a tRNA precursor + 2 CTP + ATP = a tRNA with a 3' CCA end + 3 diphosphate. The catalysed reaction is a tRNA with a 3' CCA end + 2 CTP + ATP = a tRNA with a 3' CCACCA end + 3 diphosphate. Functionally, catalyzes the addition and repair of the essential 3'-terminal CCA sequence in tRNAs without using a nucleic acid template. Adds these three nucleotides in the order of C, C, and A to the tRNA nucleotide-73, using CTP and ATP as substrates and producing inorganic pyrophosphate. tRNA 3'-terminal CCA addition is required both for tRNA processing and repair. Also involved in tRNA surveillance by mediating tandem CCA addition to generate a CCACCA at the 3' terminus of unstable tRNAs. While stable tRNAs receive only 3'-terminal CCA, unstable tRNAs are marked with CCACCA and rapidly degraded. This chain is CCA-adding enzyme, found in Ligilactobacillus salivarius (strain UCC118) (Lactobacillus salivarius).